Consider the following 574-residue polypeptide: PI-PLC X domain-containing protein DDB_G0269228 (574 aa).

Residues 1–42 (MFSSIMFKKKPKQNLNENEITSQSTTTTSTLSDSKPSEKKIK) are disordered. Low complexity predominate over residues 21 to 34 (TSQSTTTTSTLSDS). Residues 270–449 (GIKSSSLRVP…LKKRIINDDG (180 aa)) enclose the PI-PLC X-box domain.

The sequence is that of PI-PLC X domain-containing protein DDB_G0269228 from Dictyostelium discoideum (Social amoeba).